The following is an 801-amino-acid chain: Protein SDA1 homolog (801 aa).

Disordered stretches follow at residues 1-40 (MGKV…ASRF), 495-517 (RKDR…FARP), 536-647 (GEQG…SKNS), and 739-801 (DYKF…RKPQ). Residues 24–40 (KSNAPTEGSNSGKASRF) show a composition bias toward polar residues. 2 stretches are compositionally biased toward acidic residues: residues 544–568 (DGTD…DADE) and 583–633 (NDAE…EASE). 2 stretches are compositionally biased toward basic residues: residues 770-779 (NKIRGRNRQR) and 787-801 (SLRH…RKPQ).

Belongs to the SDA1 family.

Its subcellular location is the nucleus. In terms of biological role, required for 60S pre-ribosomal subunits export to the cytoplasm. Required for normal somatic gonad development and for regulation of germline development and proliferation. This Caenorhabditis elegans protein is Protein SDA1 homolog (pro-3).